A 447-amino-acid polypeptide reads, in one-letter code: DNA primase DnaG (447 aa).

Positions 200 to 274 constitute a Toprim domain; that stretch reads DSIIVVEGRA…DIDYVARAPE (75 aa). The Mg(2+) site is built by Glu206, Asp248, and Asp250.

Belongs to the archaeal DnaG primase family. Forms a ternary complex with MCM helicase and DNA. Component of the archaeal exosome complex. The cofactor is Mg(2+).

It catalyses the reaction ssDNA + n NTP = ssDNA/pppN(pN)n-1 hybrid + (n-1) diphosphate.. Its function is as follows. RNA polymerase that catalyzes the synthesis of short RNA molecules used as primers for DNA polymerase during DNA replication. Also part of the exosome, which is a complex involved in RNA degradation. Acts as a poly(A)-binding protein that enhances the interaction between heteromeric, adenine-rich transcripts and the exosome. The sequence is that of DNA primase DnaG from Pyrococcus horikoshii (strain ATCC 700860 / DSM 12428 / JCM 9974 / NBRC 100139 / OT-3).